The following is a 364-amino-acid chain: MEQNTDNVFNFSAGPAALPKAVMQQAQQELIDWQGLGTSVMEISHRSKEFIKVAQEAEQDLRDLLNIPDNYKVLFCQGGARAQFAAVPLNLLGDAETATYIDGGYWAESAVEEAKKYCEPDVFDAKTEIDGKVAVLPASEWKIAPEAAYVHFCPNETIDGIEINDLPITDKPIVADMSSTILSREIDVSKYGVIYAGAQKNIGPSGIAIAIVRDDLLGMAKQVLPSILDYKVLAEKESMFNTPPTFAWYLSGLVFKWLKAQGGVKSIETVNREKAKLLYDYIDQSDFYRNGVHPSNRSLMNVPFQLAKPELDATFLELADAKGLKALKGHRVVGGMRASIYNAMPLEGVQALVDFMKEFEQNYA.

Arg-46 lines the L-glutamate pocket. Residues 80–81, Trp-106, Thr-157, Asp-176, and Gln-199 each bind pyridoxal 5'-phosphate; that span reads AR. The residue at position 200 (Lys-200) is an N6-(pyridoxal phosphate)lysine. 241 to 242 is a binding site for pyridoxal 5'-phosphate; that stretch reads NT.

This sequence belongs to the class-V pyridoxal-phosphate-dependent aminotransferase family. SerC subfamily. In terms of assembly, homodimer. It depends on pyridoxal 5'-phosphate as a cofactor.

The protein resides in the cytoplasm. The catalysed reaction is O-phospho-L-serine + 2-oxoglutarate = 3-phosphooxypyruvate + L-glutamate. The enzyme catalyses 4-(phosphooxy)-L-threonine + 2-oxoglutarate = (R)-3-hydroxy-2-oxo-4-phosphooxybutanoate + L-glutamate. It functions in the pathway amino-acid biosynthesis; L-serine biosynthesis; L-serine from 3-phospho-D-glycerate: step 2/3. It participates in cofactor biosynthesis; pyridoxine 5'-phosphate biosynthesis; pyridoxine 5'-phosphate from D-erythrose 4-phosphate: step 3/5. In terms of biological role, catalyzes the reversible conversion of 3-phosphohydroxypyruvate to phosphoserine and of 3-hydroxy-2-oxo-4-phosphonooxybutanoate to phosphohydroxythreonine. The polypeptide is Phosphoserine aminotransferase (Vibrio parahaemolyticus serotype O3:K6 (strain RIMD 2210633)).